Here is a 420-residue protein sequence, read N- to C-terminus: Dual-specificity RNA methyltransferase RlmN (420 aa).

Catalysis depends on E115, which acts as the Proton acceptor. The 268-residue stretch at 121–388 folds into the Radical SAM core domain; sequence DADRGTLCVS…APIRTPRGRD (268 aa). C128 and C393 form a disulfide bridge. Residues C135, C139, and C142 each contribute to the [4Fe-4S] cluster site. Residues 217 to 218, S249, 271 to 273, and N350 contribute to the S-adenosyl-L-methionine site; these read GE and SLH. C393 (S-methylcysteine intermediate) is an active-site residue.

It belongs to the radical SAM superfamily. RlmN family. It depends on [4Fe-4S] cluster as a cofactor.

The protein localises to the cytoplasm. It catalyses the reaction adenosine(2503) in 23S rRNA + 2 reduced [2Fe-2S]-[ferredoxin] + 2 S-adenosyl-L-methionine = 2-methyladenosine(2503) in 23S rRNA + 5'-deoxyadenosine + L-methionine + 2 oxidized [2Fe-2S]-[ferredoxin] + S-adenosyl-L-homocysteine. It carries out the reaction adenosine(37) in tRNA + 2 reduced [2Fe-2S]-[ferredoxin] + 2 S-adenosyl-L-methionine = 2-methyladenosine(37) in tRNA + 5'-deoxyadenosine + L-methionine + 2 oxidized [2Fe-2S]-[ferredoxin] + S-adenosyl-L-homocysteine. In terms of biological role, specifically methylates position 2 of adenine 2503 in 23S rRNA and position 2 of adenine 37 in tRNAs. m2A2503 modification seems to play a crucial role in the proofreading step occurring at the peptidyl transferase center and thus would serve to optimize ribosomal fidelity. The polypeptide is Dual-specificity RNA methyltransferase RlmN (Sphingopyxis alaskensis (strain DSM 13593 / LMG 18877 / RB2256) (Sphingomonas alaskensis)).